The sequence spans 242 residues: Phosphoribosylaminoimidazole-succinocarboxamide synthase (242 aa).

This sequence belongs to the SAICAR synthetase family.

It catalyses the reaction 5-amino-1-(5-phospho-D-ribosyl)imidazole-4-carboxylate + L-aspartate + ATP = (2S)-2-[5-amino-1-(5-phospho-beta-D-ribosyl)imidazole-4-carboxamido]succinate + ADP + phosphate + 2 H(+). It functions in the pathway purine metabolism; IMP biosynthesis via de novo pathway; 5-amino-1-(5-phospho-D-ribosyl)imidazole-4-carboxamide from 5-amino-1-(5-phospho-D-ribosyl)imidazole-4-carboxylate: step 1/2. The polypeptide is Phosphoribosylaminoimidazole-succinocarboxamide synthase (Prochlorococcus marinus (strain MIT 9303)).